Here is a 106-residue protein sequence, read N- to C-terminus: UPF0145 protein VV2_1464 (106 aa).

Belongs to the UPF0145 family.

In Vibrio vulnificus (strain CMCP6), this protein is UPF0145 protein VV2_1464.